Reading from the N-terminus, the 293-residue chain is Alcohol dehydrogenase 1 (293 aa).

The Zn(2+) site is built by Cys26, Cys29, Cys32, Cys40, and Cys104. NAD(+)-binding positions include 129 to 134, Asp153, Arg158, Thr199, Val222, 222 to 224, and Phe249; these read GLGAVG and VGV.

It belongs to the zinc-containing alcohol dehydrogenase family. Homodimer. It depends on Zn(2+) as a cofactor.

The protein localises to the cytoplasm. The enzyme catalyses a primary alcohol + NAD(+) = an aldehyde + NADH + H(+). It carries out the reaction a secondary alcohol + NAD(+) = a ketone + NADH + H(+). In Zea luxurians (Guatemalan teosinte), this protein is Alcohol dehydrogenase 1 (ADH1).